A 342-amino-acid polypeptide reads, in one-letter code: UDP-xylose transporter 1 (342 aa).

The next 10 membrane-spanning stretches (helical) occupy residues 7–27 (MQMGVIGALFLSVASSVSIVI), 36–56 (LGFPFATTLTSWHLMVTYCTL), 75–95 (VVLFGLLNGISIGLLNLSLGF), 100–120 (FYQMTKLAIIPFTVLLETLFL), 132–152 (LFLLLVGVGIASITDLQLNFV), 154–174 (SVLSLLAIATTCVGQILTNTI), 184–204 (QLLYQSAPFQAAILFVSGPFV), 221–241 (IVVGFITLSCLIAVSVNFSTF), 250–270 (VTYQVLGHLKTCLVLAFGYTL), and 280–300 (IAGILIAVLGMLLYSYFCSVA). Positions 305–342 (QASSDSTFLGKDRDTTPLLGQENENHHEAKKLDKHSPV) are disordered. Positions 327–342 (NENHHEAKKLDKHSPV) are enriched in basic and acidic residues.

This sequence belongs to the TPT transporter family. TPT (TC 2.A.7.9) subfamily. Ubiquitous.

It localises to the golgi apparatus membrane. The protein resides in the endoplasmic reticulum membrane. Functionally, nucleotide-sugar transporter that transports UDP-xylose and UMP in a strict counter-exchange mode. The polypeptide is UDP-xylose transporter 1 (Arabidopsis thaliana (Mouse-ear cress)).